A 519-amino-acid polypeptide reads, in one-letter code: U3 small nucleolar RNA-associated protein 15 homolog (519 aa).

Ala2 carries the N-acetylalanine modification. 7 WD repeats span residues 36 to 75, 78 to 117, 120 to 159, 162 to 202, 204 to 242, 246 to 285, and 287 to 326; these read KEFG…PIKT, RFKD…PLRQ, GHTK…EILT, EHSD…SVIS, EHGQ…QLLV, NHHK…VVHS, and DYTA…KKDS. Lys249 participates in a covalent cross-link: Glycyl lysine isopeptide (Lys-Gly) (interchain with G-Cter in SUMO2).

In terms of assembly, part of the small subunit (SSU) processome, composed of more than 70 proteins and the RNA chaperone small nucleolar RNA (snoRNA) U3. May be a component of the proposed t-UTP subcomplex of the ribosomal small subunit (SSU) processome containing at least UTP4, WDR43, HEATR1, UTP15, WDR75. Interacts directly with UTP4 and WDR43.

Its subcellular location is the nucleus. The protein localises to the nucleolus. In terms of biological role, ribosome biogenesis factor. Involved in nucleolar processing of pre-18S ribosomal RNA. Required for optimal pre-ribosomal RNA transcription by RNA polymerase I. Part of the small subunit (SSU) processome, first precursor of the small eukaryotic ribosomal subunit. During the assembly of the SSU processome in the nucleolus, many ribosome biogenesis factors, an RNA chaperone and ribosomal proteins associate with the nascent pre-rRNA and work in concert to generate RNA folding, modifications, rearrangements and cleavage as well as targeted degradation of pre-ribosomal RNA by the RNA exosome. The sequence is that of U3 small nucleolar RNA-associated protein 15 homolog from Bos taurus (Bovine).